A 121-amino-acid chain; its full sequence is Large ribosomal subunit protein uL14 (121 aa).

The protein belongs to the universal ribosomal protein uL14 family. In terms of assembly, part of the 50S ribosomal subunit. Forms a cluster with proteins L3 and L19. In the 70S ribosome, L14 and L19 interact and together make contacts with the 16S rRNA in bridges B5 and B8.

Functionally, binds to 23S rRNA. Forms part of two intersubunit bridges in the 70S ribosome. This Synechococcus sp. (strain RCC307) protein is Large ribosomal subunit protein uL14.